We begin with the raw amino-acid sequence, 963 residues long: Iron-responsive element-binding protein 2 (963 aa).

Residues Cys-512, Cys-578, and Cys-581 each contribute to the [4Fe-4S] cluster site.

The protein belongs to the aconitase/IPM isomerase family. In terms of assembly, interacts with RBCK1 isoform 1 and isoform 2 only in iron-rich conditions. Interacts (when associated with the 4Fe-4S) with FBXL5. Interacts with CIAO1 and CIAO2A. [4Fe-4S] cluster serves as cofactor. In terms of processing, ubiquitinated and degraded by the proteasome in presence of high level of iron and oxygen. Ubiquitinated by a SCF complex containing FBXL5. Upon iron and oxygen depletion FBXL5 is degraded, preventing ubiquitination and allowing its RNA-binding activity.

The protein resides in the cytoplasm. RNA-binding protein that binds to iron-responsive elements (IRES), which are stem-loop structures found in the 5'-UTR of ferritin, and delta aminolevulinic acid synthase mRNAs, and in the 3'-UTR of transferrin receptor mRNA. Binding to the IRE element in ferritin results in the repression of its mRNA translation. Binding of the protein to the transferrin receptor mRNA inhibits the degradation of this otherwise rapidly degraded mRNA. This Homo sapiens (Human) protein is Iron-responsive element-binding protein 2 (IREB2).